Consider the following 240-residue polypeptide: Uridylate kinase (240 aa).

12 to 15 (KLSG) is a binding site for ATP. The interval 20-25 (GDQGKG) is involved in allosteric activation by GTP. UMP is bound at residue G54. ATP is bound by residues G55 and R59. UMP is bound by residues D74 and 135-142 (TGSPYFST). The ATP site is built by N163, Y169, and D172.

This sequence belongs to the UMP kinase family. As to quaternary structure, homohexamer.

The protein localises to the cytoplasm. It catalyses the reaction UMP + ATP = UDP + ADP. Its pathway is pyrimidine metabolism; CTP biosynthesis via de novo pathway; UDP from UMP (UMPK route): step 1/1. Its activity is regulated as follows. Allosterically activated by GTP. Inhibited by UTP. In terms of biological role, catalyzes the reversible phosphorylation of UMP to UDP. The polypeptide is Uridylate kinase (Ligilactobacillus salivarius (strain UCC118) (Lactobacillus salivarius)).